A 61-amino-acid chain; its full sequence is Large ribosomal subunit protein eL37 (61 aa).

Zn(2+) contacts are provided by Cys-19, Cys-22, Cys-34, and Cys-37. A C4-type zinc finger spans residues 19-37 (CRRCGRNSFNVRKGYCAAC).

This sequence belongs to the eukaryotic ribosomal protein eL37 family. Requires Zn(2+) as cofactor.

Functionally, binds to the 23S rRNA. This Sulfurisphaera tokodaii (strain DSM 16993 / JCM 10545 / NBRC 100140 / 7) (Sulfolobus tokodaii) protein is Large ribosomal subunit protein eL37 (rpl37e).